A 108-amino-acid chain; its full sequence is Thioredoxin C-2 (108 aa).

Positions 2–108 (SATIVNTTDE…KLAAFIDQNI (107 aa)) constitute a Thioredoxin domain. Cys33 and Cys36 are oxidised to a cystine.

Belongs to the thioredoxin family.

Functionally, participates in various redox reactions through the reversible oxidation of its active center dithiol to a disulfide and catalyzes dithiol-disulfide exchange reactions. This chain is Thioredoxin C-2, found in Corynebacterium nephridii.